The sequence spans 239 residues: Ribose-5-phosphate isomerase A (239 aa).

Residues 40 to 43 (SGST), 96 to 99 (DGAD), and 110 to 113 (KGGG) contribute to the substrate site. Glutamate 119 acts as the Proton acceptor in catalysis. Lysine 137 is a binding site for substrate.

The protein belongs to the ribose 5-phosphate isomerase family. In terms of assembly, homodimer.

The enzyme catalyses aldehydo-D-ribose 5-phosphate = D-ribulose 5-phosphate. Its pathway is carbohydrate degradation; pentose phosphate pathway; D-ribose 5-phosphate from D-ribulose 5-phosphate (non-oxidative stage): step 1/1. In terms of biological role, catalyzes the reversible conversion of ribose-5-phosphate to ribulose 5-phosphate. This chain is Ribose-5-phosphate isomerase A, found in Methanococcus maripaludis (strain DSM 14266 / JCM 13030 / NBRC 101832 / S2 / LL).